Here is a 174-residue protein sequence, read N- to C-terminus: Histone deacetylase complex subunit SAP30 homolog (174 aa).

The Atypical zinc finger occupies 22–70 (CCLLDDGERCRKQAGNASYSKRIQKTVTQRRLKLSIDSHARHIYICDFH).

It belongs to the SAP30 family. In terms of assembly, component of the class 1 Sin3-histone deacetylase complex (HDAC).

The protein resides in the nucleus. Required for the function of the class 1 Sin3-histone deacetylase complex (HDAC). This Anopheles gambiae (African malaria mosquito) protein is Histone deacetylase complex subunit SAP30 homolog.